The following is a 476-amino-acid chain: 4-(hydroxymethyl)benzenesulfonate dehydrogenase TsaD1 (476 aa).

NAD(+)-binding positions include 154 to 155 (WN), 178 to 181 (KAAE), and 230 to 231 (GS). Glu252 (proton acceptor) is an active-site residue. Leu253 is an NAD(+) binding site. Cys286 (nucleophile) is an active-site residue. Glu380 provides a ligand contact to NAD(+).

It belongs to the aldehyde dehydrogenase family. As to quaternary structure, homodimer.

The enzyme catalyses 4-(hydroxymethyl)benzenesulfonate + NAD(+) = 4-formylbenzenesulfonate + NADH + H(+). Involved in the toluene-4-sulfonate degradation pathway. Does not discriminate between the sulfonate and the carboxyl substituents and can also be involved in the p-toluenecarboxylate degradation pathway. This is 4-(hydroxymethyl)benzenesulfonate dehydrogenase TsaD1 (tsaD1) from Comamonas testosteroni (Pseudomonas testosteroni).